A 154-amino-acid polypeptide reads, in one-letter code: Large ribosomal subunit protein uL13 (154 aa).

The protein belongs to the universal ribosomal protein uL13 family. Part of the 50S ribosomal subunit.

In terms of biological role, this protein is one of the early assembly proteins of the 50S ribosomal subunit, although it is not seen to bind rRNA by itself. It is important during the early stages of 50S assembly. The protein is Large ribosomal subunit protein uL13 of Rhodopseudomonas palustris (strain BisB18).